A 422-amino-acid chain; its full sequence is E3 ubiquitin-protein ligase IE2 (422 aa).

Residues 1-10 (MSRQINAVTP) show a composition bias toward polar residues. Disordered stretches follow at residues 1-86 (MSRQ…VQII) and 165-215 (SPRS…EGEE). The span at 14-26 (SRRHRLSLSRRRI) shows a compositional bias: basic residues. A compositionally biased stretch (low complexity) spans 36 to 63 (PSSSSRSQPSSSSRSQPYSSSRSQPYSS). Residues 71–80 (ERSQEQRVSE) show a composition bias toward basic and acidic residues. Positions 179 to 196 (DVLSQSPDLFDSPQSPQQ) are enriched in polar residues. Residues 200–215 (ELEDEDEEEEEEEGEE) are compositionally biased toward acidic residues. The segment at 220–268 (CNICFTTLKDTKNVDSSFVTSIDCNHAVCFKCYVRIIMDNSTYKCFCSA) adopts an RING-type; degenerate zinc-finger fold. A coiled-coil region spans residues 314–414 (IDLNDVERLE…RRNSELVAEL (101 aa)).

It belongs to the alphabaculovirus IE2 protein family. In terms of assembly, homooligomer. Auto-ubiquitinated.

Its subcellular location is the host nucleus. It carries out the reaction S-ubiquitinyl-[E2 ubiquitin-conjugating enzyme]-L-cysteine + [acceptor protein]-L-lysine = [E2 ubiquitin-conjugating enzyme]-L-cysteine + N(6)-ubiquitinyl-[acceptor protein]-L-lysine.. In terms of biological role, RING-finger E3 ubiquitin ligase that plays an important regulatory role during the initial stages of infection. Migrates to specific nuclear foci early in infection supposely to prepare the sites for viral replication by targeting and ubiquitinating host proteins. The protein is E3 ubiquitin-protein ligase IE2 (IE2) of Bombyx mori nuclear polyhedrosis virus (BmNPV).